The sequence spans 29 residues: Small toxic protein TisB (29 aa).

The chain crosses the membrane as a helical span at residues 6-28 (IAILILKLIVAALQLLDAVLKYL).

Its subcellular location is the cell inner membrane. In terms of biological role, toxic component of a type I toxin-antitoxin (TA) system. Overexpression causes cessation of growth, induces stress-response, a number of membrane protein genes, and leads to cell death. Inhibits ATP synthesis, ATP levels drop drastically quickly after induction. Part of the programmed response to DNA damage; damage leads to increased accumulation of the protein which slows or stops bacterial growth, probably allowing DNA repair before cells continue to grow. This Escherichia coli (strain K12) protein is Small toxic protein TisB (tisB).